A 134-amino-acid chain; its full sequence is Large-conductance mechanosensitive channel (134 aa).

The next 2 helical transmembrane spans lie at 15–35 (IDLA…QSVV) and 80–100 (GNFI…FLAV).

Belongs to the MscL family. As to quaternary structure, homopentamer.

Its subcellular location is the cell inner membrane. Functionally, channel that opens in response to stretch forces in the membrane lipid bilayer. May participate in the regulation of osmotic pressure changes within the cell. This is Large-conductance mechanosensitive channel from Methylocella silvestris (strain DSM 15510 / CIP 108128 / LMG 27833 / NCIMB 13906 / BL2).